Consider the following 215-residue polypeptide: Pyrrolidone-carboxylate peptidase (215 aa).

Active-site residues include Glu80, Cys143, and His167.

It belongs to the peptidase C15 family. Homotetramer.

The protein localises to the cytoplasm. It catalyses the reaction Release of an N-terminal pyroglutamyl group from a polypeptide, the second amino acid generally not being Pro.. Its function is as follows. Removes 5-oxoproline from various penultimate amino acid residues except L-proline. This Bacillus cereus (strain ATCC 10987 / NRS 248) protein is Pyrrolidone-carboxylate peptidase.